We begin with the raw amino-acid sequence, 191 residues long: Syndecan-2-A (191 aa).

The signal sequence occupies residues 1 to 22 (MRNVWLIVPFALLAALSGETWA). The Extracellular segment spans residues 23 to 137 (QADRDLYIDS…NLFHRTEVLA (115 aa)). Residues 32–60 (STESSGNYPVDDDDYSSGSGSGIPARGDD) form a disordered region. S36, S48, S50, and S52 each carry an O-linked (Xyl...) (glycosaminoglycan) serine glycan. A helical membrane pass occupies residues 138-158 (AVIAGGGIGFLFAVFLILLLV). The Cytoplasmic portion of the chain corresponds to 159–191 (YRMRKKDEGSYDLGERKPSSAVYQKAPTKEFYA). The interval 168–191 (SYDLGERKPSSAVYQKAPTKEFYA) is disordered.

The protein belongs to the syndecan proteoglycan family. Post-translationally, O-glycosylated; contains both heparan sulfate and chondroitin sulfate.

Its subcellular location is the membrane. Cell surface proteoglycan. This chain is Syndecan-2-A (sdc2-a), found in Xenopus laevis (African clawed frog).